A 559-amino-acid polypeptide reads, in one-letter code: Polypeptide N-acetylgalactosaminyltransferase 1 (559 aa).

Over 1-8 the chain is Cytoplasmic; that stretch reads MRKFAYCK. A helical; Signal-anchor for type II membrane protein membrane pass occupies residues 9–28; it reads VVLATSLIWVLLDMFLLLYF. Residues 29–559 lie on the Lumenal side of the membrane; sequence SECNKCDEKK…LRNVTLPEIF (531 aa). The interval 45 to 65 is disordered; the sequence is GDVLEPVQKPHEGPGEMGKPV. Residue Asn95 is glycosylated (N-linked (GlcNAc...) asparagine). 5 disulfides stabilise this stretch: Cys106/Cys339, Cys330/Cys408, Cys442/Cys459, Cys482/Cys497, and Cys523/Cys540. Residues 115–225 are catalytic subdomain A; it reads LPTTSVVIVF…VGWLEPLLAR (111 aa). Residues Asp156 and Arg186 each coordinate substrate. Positions 209 and 211 each coordinate Mn(2+). Positions 285–347 are catalytic subdomain B; the sequence is PVRTPTMAGG…TCSHVGHVFR (63 aa). A substrate-binding site is contributed by Trp316. His344 is a binding site for Mn(2+). Substrate contacts are provided by Arg347 and Tyr352. A Ricin B-type lectin domain is found at 429 to 551; sequence FSLGEIRNVE…GSRSQQWLLR (123 aa). Asn552 carries an N-linked (GlcNAc...) asparagine glycan.

The protein belongs to the glycosyltransferase 2 family. GalNAc-T subfamily. Requires Mn(2+) as cofactor. In terms of tissue distribution, widely expressed. Expressed in all tissues tested.

The protein localises to the golgi apparatus. Its subcellular location is the golgi stack membrane. It is found in the secreted. The catalysed reaction is L-seryl-[protein] + UDP-N-acetyl-alpha-D-galactosamine = a 3-O-[N-acetyl-alpha-D-galactosaminyl]-L-seryl-[protein] + UDP + H(+). The enzyme catalyses L-threonyl-[protein] + UDP-N-acetyl-alpha-D-galactosamine = a 3-O-[N-acetyl-alpha-D-galactosaminyl]-L-threonyl-[protein] + UDP + H(+). It functions in the pathway protein modification; protein glycosylation. Catalyzes the initial reaction in O-linked oligosaccharide biosynthesis, the transfer of an N-acetyl-D-galactosamine residue to a serine or threonine residue on the protein receptor. Has a broad spectrum of substrates such as apomucin-, MUC5AC-, MUC1- and MUC2-derived peptides. This is Polypeptide N-acetylgalactosaminyltransferase 1 from Homo sapiens (Human).